The chain runs to 136 residues: MALYEHVFLARQDIAPQQVDELLKTYKNVIESHGGKVERTENWGLRSLAYRIRKNRKAHYVLINIDAPAAAIAEMERQMRINEDILRYITIRVEKHEKEQSAMLSRPDRDDFPGKDEERPRPSRRQYEDVVEGGVE.

Over residues 97–128 the composition is skewed to basic and acidic residues; sequence EKEQSAMLSRPDRDDFPGKDEERPRPSRRQYE. The segment at 97–136 is disordered; the sequence is EKEQSAMLSRPDRDDFPGKDEERPRPSRRQYEDVVEGGVE.

The protein belongs to the bacterial ribosomal protein bS6 family.

In terms of biological role, binds together with bS18 to 16S ribosomal RNA. This is Small ribosomal subunit protein bS6 from Bartonella bacilliformis (strain ATCC 35685 / KC583 / Herrer 020/F12,63).